Consider the following 138-residue polypeptide: MLVPRKLKWRKPQRGRMKGRAKGGTEVQFGEYGLQALEPAWITNRQIEAARIAMTRKIRRGGKVWINIFPHKPVTKKPAETRMGSGKGSPEEYVAVVKPGRVMFEMSGVGEELAREAMRLAAQKLPIKTRFLVRGGGS.

This sequence belongs to the universal ribosomal protein uL16 family. Part of the 50S ribosomal subunit.

Its function is as follows. Binds 23S rRNA and is also seen to make contacts with the A and possibly P site tRNAs. The sequence is that of Large ribosomal subunit protein uL16 from Rubrobacter xylanophilus (strain DSM 9941 / JCM 11954 / NBRC 16129 / PRD-1).